Reading from the N-terminus, the 159-residue chain is 6,7-dimethyl-8-ribityllumazine synthase (159 aa).

Residues Trp-30, 64 to 66 (TFE), and 88 to 90 (CVI) contribute to the 5-amino-6-(D-ribitylamino)uracil site. 93-94 (ET) contacts (2S)-2-hydroxy-3-oxobutyl phosphate. The active-site Proton donor is the His-96. Phe-121 provides a ligand contact to 5-amino-6-(D-ribitylamino)uracil. Residue Arg-135 participates in (2S)-2-hydroxy-3-oxobutyl phosphate binding.

It belongs to the DMRL synthase family.

The enzyme catalyses (2S)-2-hydroxy-3-oxobutyl phosphate + 5-amino-6-(D-ribitylamino)uracil = 6,7-dimethyl-8-(1-D-ribityl)lumazine + phosphate + 2 H2O + H(+). It functions in the pathway cofactor biosynthesis; riboflavin biosynthesis; riboflavin from 2-hydroxy-3-oxobutyl phosphate and 5-amino-6-(D-ribitylamino)uracil: step 1/2. Catalyzes the formation of 6,7-dimethyl-8-ribityllumazine by condensation of 5-amino-6-(D-ribitylamino)uracil with 3,4-dihydroxy-2-butanone 4-phosphate. This is the penultimate step in the biosynthesis of riboflavin. The chain is 6,7-dimethyl-8-ribityllumazine synthase from Cytophaga hutchinsonii (strain ATCC 33406 / DSM 1761 / CIP 103989 / NBRC 15051 / NCIMB 9469 / D465).